Reading from the N-terminus, the 208-residue chain is NAD(P)H-quinone oxidoreductase subunit I (208 aa).

2 4Fe-4S ferredoxin-type domains span residues 55–84 and 95–124; these read GRIHYEFDKCIACEVCVRVCPINLPVVDWV and RNYSIDFGVCIFCGNCVEYCPTNCLSMTEE. [4Fe-4S] cluster contacts are provided by Cys-64, Cys-67, Cys-70, Cys-74, Cys-104, Cys-107, Cys-110, and Cys-114.

Belongs to the complex I 23 kDa subunit family. In terms of assembly, NDH-1 is composed of at least 11 different subunits. The cofactor is [4Fe-4S] cluster.

It is found in the cellular thylakoid membrane. It carries out the reaction a plastoquinone + NADH + (n+1) H(+)(in) = a plastoquinol + NAD(+) + n H(+)(out). The enzyme catalyses a plastoquinone + NADPH + (n+1) H(+)(in) = a plastoquinol + NADP(+) + n H(+)(out). In terms of biological role, NDH-1 shuttles electrons from an unknown electron donor, via FMN and iron-sulfur (Fe-S) centers, to quinones in the respiratory and/or the photosynthetic chain. The immediate electron acceptor for the enzyme in this species is believed to be plastoquinone. Couples the redox reaction to proton translocation, and thus conserves the redox energy in a proton gradient. The protein is NAD(P)H-quinone oxidoreductase subunit I of Prochlorococcus marinus (strain AS9601).